The sequence spans 352 residues: UPF0324 membrane protein blr3189 (352 aa).

11 helical membrane passes run Ile-21–Arg-43, Tyr-53–Trp-71, Leu-88–Ile-110, Ala-114–Leu-136, Leu-143–Ala-165, Ser-175–Leu-197, Ile-204–Val-226, Leu-236–Ala-253, Val-265–Leu-284, Val-294–Gly-316, and Val-329–Phe-351.

The protein belongs to the UPF0324 family.

The protein resides in the cell membrane. The chain is UPF0324 membrane protein blr3189 from Bradyrhizobium diazoefficiens (strain JCM 10833 / BCRC 13528 / IAM 13628 / NBRC 14792 / USDA 110).